The sequence spans 218 residues: TPA-induced transmembrane protein homolog (218 aa).

Residues 1-54 (MEEGSRSQSPREELELSMLDGPQEELTPLNNDLRIQPNSAEDPSPAQVGKESPW) are disordered. The helical transmembrane segment at 66-86 (KLWMVIVTIFLCFIIVIVISL) threads the bilayer.

The protein localises to the endoplasmic reticulum membrane. The chain is TPA-induced transmembrane protein homolog from Mus musculus (Mouse).